Reading from the N-terminus, the 281-residue chain is Small ribosomal subunit protein uS3 (281 aa).

The KH type-2 domain occupies 38–106 (IRRLLSTGLE…QVQLNILEVK (69 aa)). The tract at residues 218–281 (APAGAERARR…VTHEPQIAES (64 aa)) is disordered. Residues 238-256 (SGAAGTTVTGTDAGRAVGG) are compositionally biased toward low complexity.

It belongs to the universal ribosomal protein uS3 family. As to quaternary structure, part of the 30S ribosomal subunit. Forms a tight complex with proteins S10 and S14.

Its function is as follows. Binds the lower part of the 30S subunit head. Binds mRNA in the 70S ribosome, positioning it for translation. The protein is Small ribosomal subunit protein uS3 of Mycobacterium leprae (strain Br4923).